Here is a 51-residue protein sequence, read N- to C-terminus: Large ribosomal subunit protein eL39 (51 aa).

This sequence belongs to the eukaryotic ribosomal protein eL39 family.

This is Large ribosomal subunit protein eL39 (rpl39e) from Pyrococcus abyssi (strain GE5 / Orsay).